A 158-amino-acid chain; its full sequence is Transcription elongation factor GreA (158 aa).

Residues 4–70 adopt a coiled-coil conformation; it reads QKQYPMTQEG…IEQDIQRIEH (67 aa).

This sequence belongs to the GreA/GreB family.

In terms of biological role, necessary for efficient RNA polymerase transcription elongation past template-encoded arresting sites. The arresting sites in DNA have the property of trapping a certain fraction of elongating RNA polymerases that pass through, resulting in locked ternary complexes. Cleavage of the nascent transcript by cleavage factors such as GreA or GreB allows the resumption of elongation from the new 3'terminus. GreA releases sequences of 2 to 3 nucleotides. This Staphylococcus aureus (strain Mu3 / ATCC 700698) protein is Transcription elongation factor GreA.